The chain runs to 125 residues: Upsalin (125 aa).

Residues 1–16 (MFPTHVLLIVIACVTA) form the signal peptide.

In terms of processing, weakly glycosylated. Expressed at highest levels in mantle, followed by adductor muscle. Found in the nacreous shell layer (at protein level).

Its subcellular location is the secreted. The chain is Upsalin from Unio pictorum (Painter's mussel).